The chain runs to 525 residues: Biotinidase (525 aa).

A signal peptide spans 1–26 (MSRAGRQLALLLCSCCVAVAIPGGLA). One can recognise a CN hydrolase domain in the interval 54 to 333 (DPLALTSREQ…PGLISAGNAT (280 aa)). Residue glutamate 94 is the Proton acceptor of the active site. N-linked (GlcNAc...) asparagine glycans are attached at residues asparagine 132 and asparagine 185. Lysine 194 serves as the catalytic Proton donor. Cysteine 227 (nucleophile) is an active-site residue. N-linked (GlcNAc...) asparagine glycosylation is present at asparagine 384.

The protein belongs to the carbon-nitrogen hydrolase superfamily. BTD/VNN family.

It is found in the secreted. The protein localises to the extracellular space. The catalysed reaction is biocytin + H2O = biotin + L-lysine. The enzyme catalyses biotin amide + H2O = biotin + NH4(+). Catalytic release of biotin from biocytin, the product of biotin-dependent carboxylases degradation. The polypeptide is Biotinidase (BTD) (Bos taurus (Bovine)).